The sequence spans 283 residues: Probable replication-associated protein repA1 (283 aa).

This sequence belongs to the IncFII RepA family.

In terms of biological role, this protein is essential for plasmid replication; it is involved in copy control functions. The polypeptide is Probable replication-associated protein repA1 (repA1) (Buchnera aphidicola subsp. Schizaphis graminum (strain Sg)).